An 80-amino-acid polypeptide reads, in one-letter code: Defensin-like protein 17 (80 aa).

A signal peptide spans 1-29 (MAKSATIITFLFAALVLFAAFEAPTMVEA). Gln-30 carries the pyrrolidone carboxylic acid modification. 4 cysteine pairs are disulfide-bonded: Cys-33-Cys-80, Cys-44-Cys-65, Cys-50-Cys-74, and Cys-54-Cys-76.

It belongs to the DEFL family.

The protein resides in the secreted. Functionally, confers broad-spectrum resistance to pathogens. In Arabidopsis thaliana (Mouse-ear cress), this protein is Defensin-like protein 17 (PDF1.2C).